We begin with the raw amino-acid sequence, 206 residues long: LexA repressor (206 aa).

Positions 28-48 (VREICNAVGLSSTSTVHGHLS) form a DNA-binding region, H-T-H motif. Catalysis depends on for autocatalytic cleavage activity residues Ser128 and Lys166.

The protein belongs to the peptidase S24 family. As to quaternary structure, homodimer.

It carries out the reaction Hydrolysis of Ala-|-Gly bond in repressor LexA.. Functionally, represses a number of genes involved in the response to DNA damage (SOS response), including recA and lexA. In the presence of single-stranded DNA, RecA interacts with LexA causing an autocatalytic cleavage which disrupts the DNA-binding part of LexA, leading to derepression of the SOS regulon and eventually DNA repair. This Ligilactobacillus salivarius (strain UCC118) (Lactobacillus salivarius) protein is LexA repressor.